The chain runs to 99 residues: MAVNPLDFLKNMSSVKSNIDNIKKEMSKITVCGKAGSNIVTIEMDGEFNVKKVSINKEFFDDLDNDAFEQMVKSALNDAVSKVKEEIKLKTMGVLPFGM.

The protein belongs to the YbaB/EbfC family. In terms of assembly, homodimer.

It localises to the cytoplasm. Its subcellular location is the nucleoid. Functionally, binds to DNA and alters its conformation. May be involved in regulation of gene expression, nucleoid organization and DNA protection. This chain is Nucleoid-associated protein EbfC, found in Borreliella afzelii (strain PKo) (Borrelia afzelii).